The following is a 426-amino-acid chain: MNALTVKRRLPVLLFLFHISLSSISSNTILENDFHSSFVQRRLKGHERREIQKEILTILGLQHRPRPYLPEKKKSAPLFMMDLYNAVNIEEMHAEDVSYSNKPISLNEAFSLATDQENGFLAHADTVMSFANLVDNDNELHKNSYRQKFKFDLTDIPLGDELTAAEFRIYKDYVQNNETYQVTIYQVLKKQADKDPYLFQVDSRTIWGTEKGWLTFDITATGNHWVMNPHYNLGLQLSVESMDMQNVNPRLVGLVGKNGPQDKQPFMVAFFKTSDIHLRSVRSTSNKHWNQERAKTYKEQDNLPPANITDGIMPPGKRRFLKQACKKHELFVSFRDLGWQDWIIAPEGYAAYYCDGECAFPLNSFMNATNHAIVQTLVHFINPETVPKPCCAPTQLNGISVLYFDDSANVILKKYKNMVVQACGCH.

Positions 1-22 are cleaved as a signal peptide; sequence MNALTVKRRLPVLLFLFHISLS. Positions 23–282 are excised as a propeptide; that stretch reads SISSNTILEN…TSDIHLRSVR (260 aa). 3 N-linked (GlcNAc...) asparagine glycosylation sites follow: Asn177, Asn307, and Asn367. Cystine bridges form between Cys325–Cys391, Cys354–Cys423, and Cys358–Cys425.

The protein belongs to the TGF-beta family. Homodimer; disulfide-linked. Interacts with twsg1.

The protein resides in the secreted. Growth factor of the TGF-beta superfamily that plays important role in various biological processes, including embryogenesis, hematopoiesis, neurogenesis and skeletal morphogenesis. Initiates the canonical BMP signaling cascade by associating with type I receptor ACVR1 and type II receptor ACVR2A. Once all three components are bound together in a complex at the cell surface, ACVR2A phosphorylates and activates ACVR1. In turn, ACVR1 propagates signal by phosphorylating SMAD1/5/8 that travel to the nucleus and act as activators and repressors of transcription of target genes. The polypeptide is Bone morphogenetic protein 7 (bmp7) (Xenopus laevis (African clawed frog)).